The chain runs to 189 residues: Movement protein (189 aa).

It belongs to the tombusvirus/aureusvirus movement protein p22 family.

The protein resides in the host membrane. Its function is as follows. Transports viral genome to neighboring plant cells directly through plasmosdesmata, without any budding. The movement protein allows efficient cell to cell propagation, by bypassing the host cell wall barrier. This Cymbidium ringspot virus (CymRSV) protein is Movement protein.